The sequence spans 177 residues: MVQSQGWVRRYFKAFCKGFFVAVPVAVTFLDRVACVARVEGASMQPSLNPGGSQSSDVVLLNHWKVRNFEVQRGDIVSLVSPKNPEQKIIKRVIALEGDIVKTMGHKNRYVKVPRGHIWVEGDHHGHSFDSNSFGPVSLGLLHAHATHILWPPKRWQKLESVLPPERLLVQSEEDCL.

The chain crosses the membrane as a helical span at residues F19–A37. Active-site residues include S43 and K91.

This sequence belongs to the peptidase S26 family. IMP2 subfamily. Heterodimer of 2 subunits, IMMPL1 and IMMPL2.

The protein localises to the mitochondrion inner membrane. Its function is as follows. Catalyzes the removal of transit peptides required for the targeting of proteins from the mitochondrial matrix, across the inner membrane, into the inter-membrane space. Known to process the nuclear encoded protein DIABLO. In Bos taurus (Bovine), this protein is Mitochondrial inner membrane protease subunit 2 (IMMP2L).